A 115-amino-acid polypeptide reads, in one-letter code: Ribonuclease P protein component (115 aa).

This sequence belongs to the RnpA family. In terms of assembly, consists of a catalytic RNA component (M1 or rnpB) and a protein subunit.

The catalysed reaction is Endonucleolytic cleavage of RNA, removing 5'-extranucleotides from tRNA precursor.. Its function is as follows. RNaseP catalyzes the removal of the 5'-leader sequence from pre-tRNA to produce the mature 5'-terminus. It can also cleave other RNA substrates such as 4.5S RNA. The protein component plays an auxiliary but essential role in vivo by binding to the 5'-leader sequence and broadening the substrate specificity of the ribozyme. This Bacillus cereus (strain ATCC 10987 / NRS 248) protein is Ribonuclease P protein component.